The sequence spans 471 residues: MGFLWTGSWILVLVLNSGPIQAFPKPEGSQDKSLHNRELSAERPLNEQIAEAEADKIKKTYPSESKPSESNFSSVDNLNLLKAITEKETVEKAKQSIRSSPFDNRLNVDDADSTKNRKLTDEYDSTKSGLDRKVQDDPDGLHQLDGTPLTAEDIVHKIATRIYEENDRGVFDKIVSKLLNLGLITESQAHTLEDEVAEALQKLISKEANNYEEAPEKPTSRTENQDGKIPEKVTPVAATQDGFTNRENDDTVSNTLTLSNGLERRTNPHRDDDFEELQYFPNFYALLTSIDSEKEAKEKETLITIMKTLIDFVKMMVKYGTISPEEGVSYLENLDETIALQTKNKLEKNTTDSKSKLFPAPPEKSHEETDSTKEEAAKMEKEYGSLKDSTKDDNSNLGGKTDEAKGKTEAYLEAIRKNIEWLKKHNKKGNKEDYDLSKMRDFINQQADAYVEKGILDKEEANAIKRIYSSL.

The N-terminal stretch at 1–22 (MGFLWTGSWILVLVLNSGPIQA) is a signal peptide. Disordered stretches follow at residues 24–73 (PKPE…SNFS), 92–145 (KAKQ…HQLD), 208–231 (ANNY…KIPE), and 345–405 (KLEK…DEAK). Positions 28 to 45 (GSQDKSLHNRELSAERPL) are enriched in basic and acidic residues. A Phosphoserine modification is found at serine 40. The O-linked (Xyl...) (chondroitin sulfate) serine glycan is linked to serine 40. Low complexity predominate over residues 62-73 (PSESKPSESNFS). Basic and acidic residues-rich tracts occupy residues 106–142 (LNVD…DGLH), 214–231 (APEK…KIPE), 345–355 (KLEKNTTDSKS), and 363–405 (EKSH…DEAK). Phosphoserine is present on serine 365.

Interacts with CHGA. Interacts with secretogranin II/SCG2. Interacts (via C-terminus) with CPE. In terms of tissue distribution, expression restricted to the brain and pituitary gland. Not detected in the adrenal gland.

The protein resides in the cytoplasmic vesicle. The protein localises to the secretory vesicle. Its subcellular location is the secretory vesicle membrane. It is found in the secreted. In terms of biological role, member of the granin protein family that regulates the biogenesis of secretory granules. Acts as a sorting receptor for intragranular proteins including chromogranin A/CHGA. May also play a role in angiogenesis. Promotes endothelial proliferation, migration and tube formation through MEK/ERK signaling pathway. This chain is Secretogranin-3 (Scg3), found in Rattus norvegicus (Rat).